The following is a 206-amino-acid chain: Transmembrane emp24 domain-containing protein bai (206 aa).

The first 20 residues, 1 to 20 (MARTLLILCTLMAWAWTGEA), serve as a signal peptide directing secretion. Topologically, residues 21–172 (VMFKLTPNTQ…RDTNEKTNSR (152 aa)) are lumenal. Residues 30-140 (QKCLKEDIQA…LKPLEVDLKR (111 aa)) form the GOLD domain. A helical transmembrane segment spans residues 173–193 (VLFFSIFSMCCLLGLATWQVL). Topologically, residues 194-206 (YLRRYFKAKKLIE) are cytoplasmic.

It belongs to the EMP24/GP25L family.

The protein resides in the membrane. Its function is as follows. Eca and bai are essential, though not redundant, for dorsoventral patterning of the embryo. Specifically required during early embryogenesis for the activity of maternal tkv, while the zygotic tkv is not affected. This is Transmembrane emp24 domain-containing protein bai from Drosophila ananassae (Fruit fly).